The primary structure comprises 72 residues: Brevinin-2GHc (72 aa).

An N-terminal signal peptide occupies residues 1–22 (MFTMKKSLLLLFFLGMISLSLC). A propeptide spanning residues 23–42 (EQERGADEDEGEVEEQIKRS) is cleaved from the precursor. A disulfide bridge connects residues C64 and C70.

Expressed by the skin glands.

Its subcellular location is the secreted. In terms of biological role, antimicrobial peptide. Active against the Gram-positive bacteria S.aureus FDA209P (MIC=9.8 ug/ml) and B.subtilis ATCC 6633 (MIC&gt;64 ug/ml), and the Gram-negative bacteria E.coli O111 (MIC=19.6 ug/ml) and E.coli ATCC 25922 (MIC=9.8 ug/ml). Not active against the fungus C.albicans. This is Brevinin-2GHc from Sylvirana guentheri (Gunther's frog).